Reading from the N-terminus, the 136-residue chain is MSLIKEFKAFASRGNVIDMAVGIIIGAAFGKIVSSFVADVIMPPIGIILGGVNFSDLSIVLQAAQGDAPSVVIAYGKFIQTVIDFTIIAFAIFMGLKAINTLKRKEEEAPKAPPAPTKEEELLSEIRDLLKAQQEK.

2 consecutive transmembrane segments (helical) span residues 9 to 29 (AFAS…GAAF) and 79 to 99 (IQTV…LKAI).

Belongs to the MscL family. As to quaternary structure, homopentamer.

It is found in the cell inner membrane. Its function is as follows. Channel that opens in response to stretch forces in the membrane lipid bilayer. May participate in the regulation of osmotic pressure changes within the cell. The polypeptide is Large-conductance mechanosensitive channel (Shewanella putrefaciens (strain CN-32 / ATCC BAA-453)).